A 414-amino-acid chain; its full sequence is Snake venom metalloproteinase (414 aa).

Positions 1–20 (MIEVLLVTICLAVFPYQGSS) are cleaved as a signal peptide. Residues 21–190 (IILESGNVND…KASDLNFNSD (170 aa)) constitute a propeptide that is removed on maturation. Gln-191 carries the post-translational modification Pyrrolidone carboxylic acid. Residues 197–393 (RYVELVIVAD…YKPQCILNKP (197 aa)) form the Peptidase M12B domain. Residues Glu-200 and Asp-284 each contribute to the Ca(2+) site. 2 cysteine pairs are disulfide-bonded: Cys-308–Cys-388 and Cys-348–Cys-355. Residue His-333 coordinates Zn(2+). Residue Glu-334 is part of the active site. Zn(2+) is bound by residues His-337 and His-343. Ca(2+) is bound by residues Cys-388 and Asn-391. A propeptide spanning residues 394-414 (LRIDPVSTPVSGNELLEAGEE) is cleaved from the precursor.

Belongs to the venom metalloproteinase (M12B) family. P-I subfamily. Monomer. Zn(2+) serves as cofactor. In terms of tissue distribution, expressed by the venom gland.

The protein localises to the secreted. Functionally, snake venom metalloproteinase that impairs hemostasis in the envenomed animal. This is Snake venom metalloproteinase from Crotalus molossus molossus (Northern black-tailed rattlesnake).